Consider the following 328-residue polypeptide: DNA-directed RNA polymerase subunit alpha 2 (328 aa).

The alpha N-terminal domain (alpha-NTD) stretch occupies residues 1–234 (MQGSVIEFLK…EQLDAFVDLR (234 aa)). Residues 248–328 (FDPILLRPVD…NWPPASLSED (81 aa)) are alpha C-terminal domain (alpha-CTD).

Belongs to the RNA polymerase alpha chain family. As to quaternary structure, homodimer. The RNAP catalytic core consists of 2 alpha, 1 beta, 1 beta' and 1 omega subunit. When a sigma factor is associated with the core the holoenzyme is formed, which can initiate transcription.

The catalysed reaction is RNA(n) + a ribonucleoside 5'-triphosphate = RNA(n+1) + diphosphate. Its function is as follows. DNA-dependent RNA polymerase catalyzes the transcription of DNA into RNA using the four ribonucleoside triphosphates as substrates. This is DNA-directed RNA polymerase subunit alpha 2 from Psychromonas ingrahamii (strain DSM 17664 / CCUG 51855 / 37).